Consider the following 305-residue polypeptide: Mitochondrial distribution and morphology protein 12 (305 aa).

Positions 1-236 constitute an SMP-LTD domain; it reads MSVEIDWDNI…WPSWIDLDFT (236 aa). Residues 233 to 305 form a disordered region; it reads LDFTPEDPED…RVNSNTSLEE (73 aa). A compositionally biased stretch (acidic residues) spans 235 to 248; the sequence is FTPEDPEDPEEEGR. Residues 258-269 show a composition bias toward basic and acidic residues; the sequence is NDGKDIEMKSGT. Residues 279–305 are compositionally biased toward polar residues; the sequence is ESVQHVSPAVTSIDQESRVNSNTSLEE.

Belongs to the MDM12 family. In terms of assembly, component of the ER-mitochondria encounter structure (ERMES) or MDM complex, composed of MMM1, MDM10, MDM12 and MDM34. An MMM1 homodimer associates with one molecule of MDM12 on each side in a pairwise head-to-tail manner, and the SMP-LTD domains of MMM1 and MDM12 generate a continuous hydrophobic tunnel for phospholipid trafficking.

Its subcellular location is the mitochondrion outer membrane. It localises to the endoplasmic reticulum membrane. In terms of biological role, component of the ERMES/MDM complex, which serves as a molecular tether to connect the endoplasmic reticulum (ER) and mitochondria. Components of this complex are involved in the control of mitochondrial shape and protein biogenesis, and function in nonvesicular lipid trafficking between the ER and mitochondria. MDM12 is required for the interaction of the ER-resident membrane protein MMM1 and the outer mitochondrial membrane-resident beta-barrel protein MDM10. The MDM12-MMM1 subcomplex functions in the major beta-barrel assembly pathway that is responsible for biogenesis of all mitochondrial outer membrane beta-barrel proteins, and acts in a late step after the SAM complex. The MDM10-MDM12-MMM1 subcomplex further acts in the TOM40-specific pathway after the action of the MDM12-MMM1 complex. Essential for establishing and maintaining the structure of mitochondria and maintenance of mtDNA nucleoids. This Kluyveromyces lactis (strain ATCC 8585 / CBS 2359 / DSM 70799 / NBRC 1267 / NRRL Y-1140 / WM37) (Yeast) protein is Mitochondrial distribution and morphology protein 12.